The chain runs to 935 residues: Intimin (935 aa).

The N-terminal stretch at M1–G41 is a signal peptide. The interval N40–T153 is peptidoglycan-binding. Positions N40–T153 are sufficient for homodimerization. The segment at N40–T212 is required for periplasmic localization. The LysM domain maps to L63 to L112. Residues Y210–F411 are inverse autotransporter. The tract at residues L402–F411 is signature sequence for beta-barrel assembly machinery (BAM), which recognizes the unfolded beta-barrel in the periplasm. Big-1 domains lie at V560–V653 and I660–F754. Residues G790 to S834 form the BIG2 domain. An intrachain disulfide couples C859 to C933.

Belongs to the intimin/invasin family. Homodimer. Interacts with Tir.

Its subcellular location is the cell outer membrane. Functionally, an inverse autotransporter. Adhesin, which mediates attachment to the human intestine epithelial cells. Necessary for the production of attaching and effacing lesions on infected human tissue culture cells. Anchored to the outer membrane by binding to peptidoglycan (PGN) via its periplasmic domain, thus helping in receptor interactions during host invasion. PGN-binding may also aid in resisting mechanical and chemical stress during transit of the bacterium through the gastrointestinal tract of the host. This chain is Intimin (eae), found in Escherichia coli O111:H-.